Consider the following 102-residue polypeptide: Neuropeptide F (102 aa).

Residues 1–29 (MSNTMRCILIVCVALTLIAAGCNVEASNS) form the signal peptide. Positions 30-32 (RPP) are excised as a propeptide. Phe62 is subject to Phenylalanine amide. Residues 66 to 102 (GGPLMEMLRNRELENNMAKSINSGGELIRALDEEEVF) constitute a propeptide that is removed on maturation.

Belongs to the NPY family.

Its subcellular location is the secreted. Functionally, an integral part of the sensory system that mediates food signaling, providing the neural basis for the regulation of food response; coordinates larval foraging and social behavior changes during development. May have a hormonal role in females. The chain is Neuropeptide F from Drosophila pseudoobscura pseudoobscura (Fruit fly).